Reading from the N-terminus, the 1232-residue chain is Protein transport protein sec-16A.1 (1232 aa).

Disordered regions lie at residues G18–A134, R172–E193, P815–D843, K866–E942, Q972–Q1069, and P1140–D1232. Residues D26–S37 are compositionally biased toward polar residues. The segment covering R67–P76 has biased composition (low complexity). Residues S78–N100 show a composition bias toward polar residues. The span at Q817–S836 shows a compositional bias: polar residues. The span at S896–T914 shows a compositional bias: low complexity. Composition is skewed to polar residues over residues Q1046–T1060, S1149–S1159, and Y1168–A1178. Positions P1194–P1203 are enriched in low complexity. Over residues P1222–D1232 the composition is skewed to polar residues.

Belongs to the SEC16 family. Interacts with tfg-1 (via N-terminus); the interaction is direct and is required for both the localization of tfg-1 and to maintain the distribution of sec-16A.1 at endoplasmic reticulum exit sites (ERES).

The protein localises to the endoplasmic reticulum. The protein resides in the endoplasmic reticulum-Golgi intermediate compartment. Plays a role in the organization of the endoplasmic reticulum exit sites (ERES), also known as transitional endoplasmic reticulum (tER). In association with tfg-1, accumulates at ERES to positively regulate secretory cargo trafficking from the endoplasmic reticulum to the endoplasmic reticulum-Golgi intermediate compartment (ERGIC) and Golgi apparatus. This chain is Protein transport protein sec-16A.1, found in Caenorhabditis elegans.